Consider the following 462-residue polypeptide: MATVHLRIGDLVWGKLGRYPPWPGKVVSPPKDLKKPRGKKCFFVKFFGTEDHAWIKVEQLKPYHPHKEEMIKVNKGKRFQQAVDAVEEYLKKAKGKDQSHSDDKSKSDKGRKAAKPMKIIEEDDEDAFKGGSSDKPASSMEPITKRLKIIEEDTRSTSIQAADSTAINGSITPTDKRIGFLGLGLMGSGVVSNLLKMGHVVTVWNRTAEKCDLFIQEGARLGRTPAEVVSMCDITFSCVSDPKAARDLVLGPSGVLQGIRPGKCYVEMSTVDPETITELSQVITSRGGRFLEAPVSGSQQLSNDGMLVIVAAGDRSVYEDCSSCFQAMGKTSFFIAGEAGNAARMMLILNMVQGSFMATIAEGLTLAQATGQSQQTFLDILCQGQMASTFVDQKCQNILQGNFKPDYYLKHIQKDLRLAISMGDSVNHPTPMAAAANEVYKRAKALDQSDNDMSAVYRAYIH.

The region spanning 8–66 (IGDLVWGKLGRYPPWPGKVVSPPKDLKKPRGKKCFFVKFFGTEDHAWIKVEQLKPYHPH) is the PWWP domain. A compositionally biased stretch (basic and acidic residues) spans 91-111 (KKAKGKDQSHSDDKSKSDKGR). The disordered stretch occupies residues 91 to 139 (KKAKGKDQSHSDDKSKSDKGRKAAKPMKIIEEDDEDAFKGGSSDKPASS). The dehydrogenase domain stretch occupies residues 169–462 (GSITPTDKRI…MSAVYRAYIH (294 aa)). NAD(+) contacts are provided by residues 179–193 (GFLG…VVSN), threonine 270, and lysine 414.

It belongs to the HIBADH-related family. NP60 subfamily. As to quaternary structure, homotetramere. Binds to mononucleosomes.

Its subcellular location is the nucleus. It is found in the chromosome. May have oxidoreductase activity. Regulates p38 MAP kinase activity by mediating stress activation of mapk14 and specifically regulating mapk14 signaling. Its function is as follows. Cytokine-like nuclear factor with chromatin gene reader activity involved in chromatin modification and regulation of gene expression. Acts as a nucleosome-destabilizing factor that is recruited to genes during transcriptional activation. Recognizes and binds histone H3 without a preference for specific epigenetic markers and also binds DNA. Interacts with KDM1B and promotes its histone demethylase activity by facilitating the capture of H3 tails, they form a multifunctional enzyme complex that modifies transcribed chromatin and facilitates Pol II transcription through nucleosomes. In Danio rerio (Zebrafish), this protein is Cytokine-like nuclear factor N-PAC (glyr1).